The following is a 310-amino-acid chain: Succinate dehydrogenase assembly factor 2, mitochondrial (310 aa).

Basic and acidic residues predominate over residues 35 to 48 (LKDGSDEASPEVKA). Residues 35–67 (LKDGSDEASPEVKAHRANQANKAPNQFVPNTTS) are disordered. Over residues 52–67 (NQANKAPNQFVPNTTS) the composition is skewed to polar residues.

Belongs to the SDHAF2 family. Interacts with the flavoprotein subunit within the SDH catalytic dimer.

It is found in the mitochondrion matrix. Its function is as follows. Plays an essential role in the assembly of succinate dehydrogenase (SDH), an enzyme complex (also referred to as respiratory complex II) that is a component of both the tricarboxylic acid (TCA) cycle and the mitochondrial electron transport chain, and which couples the oxidation of succinate to fumarate with the reduction of ubiquinone (coenzyme Q) to ubiquinol. Required for flavinylation (covalent attachment of FAD) of the flavoprotein subunit of the SDH catalytic dimer. The sequence is that of Succinate dehydrogenase assembly factor 2, mitochondrial from Penicillium rubens (strain ATCC 28089 / DSM 1075 / NRRL 1951 / Wisconsin 54-1255) (Penicillium chrysogenum).